A 405-amino-acid chain; its full sequence is MDFRTYLKRYPDKNGRFGQYGGAYLTNELIPAFEEIADAYQTICHSSQFISELRRIRKEFQGRPTPVYHCERLSRAIGNCQIYLKREDLNHTGAHKLNHCMGEGLLAKFMGKKRLIAETGAGQHGVALATAAAFFGLECEIHMGEVDIAKQAPNVTRMKILGAKVVPVTHGLKTLKEAVDSAFDSYAKNYKDSIYCIGSALGPHPFPLMVRDFQAVVGYEAKDQFKEMTGFLPDVVTACVGGGSNAAGMFIPFLEEPVDIIGIEPLGRGEKLGDHAASMKYGEKGVMHGFESIMLKDKNGNPAPVYSIASGLDYPSVGPEHAFLRELGRVDYKVINDEEAMEAFFKLSRYEGIIPAIESSHAVAYAMKKAKEMKQGSILVCLSGRGDKDIDYVVEHYGYGEQYFK.

Position 96 is an N6-(pyridoxal phosphate)lysine (Lys-96).

It belongs to the TrpB family. As to quaternary structure, tetramer of two alpha and two beta chains. Pyridoxal 5'-phosphate serves as cofactor.

The catalysed reaction is (1S,2R)-1-C-(indol-3-yl)glycerol 3-phosphate + L-serine = D-glyceraldehyde 3-phosphate + L-tryptophan + H2O. Its pathway is amino-acid biosynthesis; L-tryptophan biosynthesis; L-tryptophan from chorismate: step 5/5. The beta subunit is responsible for the synthesis of L-tryptophan from indole and L-serine. This chain is Tryptophan synthase beta chain, found in Clostridium botulinum (strain Alaska E43 / Type E3).